Here is a 98-residue protein sequence, read N- to C-terminus: NADH-ubiquinone oxidoreductase chain 4L (98 aa).

The next 3 membrane-spanning stretches (helical) occupy residues 1-21 (MSMV…GMLV), 29-49 (SLLC…VTIL), and 61-81 (IVLL…LVMV).

This sequence belongs to the complex I subunit 4L family. As to quaternary structure, core subunit of respiratory chain NADH dehydrogenase (Complex I) which is composed of 45 different subunits.

The protein resides in the mitochondrion inner membrane. It catalyses the reaction a ubiquinone + NADH + 5 H(+)(in) = a ubiquinol + NAD(+) + 4 H(+)(out). Core subunit of the mitochondrial membrane respiratory chain NADH dehydrogenase (Complex I) which catalyzes electron transfer from NADH through the respiratory chain, using ubiquinone as an electron acceptor. Part of the enzyme membrane arm which is embedded in the lipid bilayer and involved in proton translocation. In Vulpes vulpes (Red fox), this protein is NADH-ubiquinone oxidoreductase chain 4L (MT-ND4L).